A 208-amino-acid chain; its full sequence is Thymidylate kinase (208 aa).

ATP is bound at residue 7–14; the sequence is GIDGAGKT.

Belongs to the thymidylate kinase family.

The catalysed reaction is dTMP + ATP = dTDP + ADP. In terms of biological role, phosphorylation of dTMP to form dTDP in both de novo and salvage pathways of dTTP synthesis. The protein is Thymidylate kinase of Xylella fastidiosa (strain Temecula1 / ATCC 700964).